The chain runs to 1919 residues: Protein TIC 214 (1919 aa).

Helical transmembrane passes span 18–38, 67–87, 90–110, 127–147, 175–195, and 224–244; these read IINSVVVVGLYYGFLTTFSIG, FITGQLMMFISIYYAPLHLAL, PHTITVLALPYLLFHFFWNNH, LSIQCVFLNNLIFQLFNHFIL, VGWLIGHILFMKWVGLVLVWI, and IFSILLFITCVYYLGRIPSPI. Disordered regions lie at residues 250–375, 1107–1129, and 1606–1636; these read KETP…GKEK, IKSITKEKKKGTPGIKSSPNKRS, and ELKNRNQEEKEPADRGDLGSDAQNQGNRRFV. Acidic residues-rich tracts occupy residues 259 to 269, 278 to 288, 297 to 307, 316 to 328, and 355 to 366; these read GESEEETDVEI, GESEEETDVEIET, and EKEDPDKIDETE. Residues 1107 to 1117 are compositionally biased toward basic residues; the sequence is IKSITKEKKKG. A compositionally biased stretch (basic and acidic residues) spans 1606–1623; that stretch reads ELKNRNQEEKEPADRGDL. The segment covering 1626–1636 has biased composition (polar residues); sequence DAQNQGNRRFV.

This sequence belongs to the TIC214 family. As to quaternary structure, part of the Tic complex.

The protein resides in the plastid. It is found in the chloroplast inner membrane. In terms of biological role, involved in protein precursor import into chloroplasts. May be part of an intermediate translocation complex acting as a protein-conducting channel at the inner envelope. This chain is Protein TIC 214, found in Panax ginseng (Korean ginseng).